The chain runs to 487 residues: Glutamate--tRNA ligase (487 aa).

Positions 11-21 match the 'HIGH' region motif; it reads PSPTGYPHLGN. Cys-108, Cys-110, Cys-135, and Asp-137 together coordinate Zn(2+). Positions 245-249 match the 'KMSKS' region motif; sequence KLSKR. ATP is bound at residue Lys-248.

This sequence belongs to the class-I aminoacyl-tRNA synthetase family. Glutamate--tRNA ligase type 1 subfamily. Monomer. The cofactor is Zn(2+).

Its subcellular location is the cytoplasm. It catalyses the reaction tRNA(Glu) + L-glutamate + ATP = L-glutamyl-tRNA(Glu) + AMP + diphosphate. In terms of biological role, catalyzes the attachment of glutamate to tRNA(Glu) in a two-step reaction: glutamate is first activated by ATP to form Glu-AMP and then transferred to the acceptor end of tRNA(Glu). The polypeptide is Glutamate--tRNA ligase (Dehalococcoides mccartyi (strain ATCC BAA-2100 / JCM 16839 / KCTC 5957 / BAV1)).